Here is a 93-residue protein sequence, read N- to C-terminus: Integration host factor subunit beta (93 aa).

This sequence belongs to the bacterial histone-like protein family. In terms of assembly, heterodimer of an alpha and a beta chain.

Functionally, this protein is one of the two subunits of integration host factor, a specific DNA-binding protein that functions in genetic recombination as well as in transcriptional and translational control. The protein is Integration host factor subunit beta of Idiomarina loihiensis (strain ATCC BAA-735 / DSM 15497 / L2-TR).